The chain runs to 561 residues: DNA ligase B (561 aa).

Lysine 125 serves as the catalytic N6-AMP-lysine intermediate.

It belongs to the NAD-dependent DNA ligase family. LigB subfamily.

The catalysed reaction is NAD(+) + (deoxyribonucleotide)n-3'-hydroxyl + 5'-phospho-(deoxyribonucleotide)m = (deoxyribonucleotide)n+m + AMP + beta-nicotinamide D-nucleotide.. Catalyzes the formation of phosphodiester linkages between 5'-phosphoryl and 3'-hydroxyl groups in double-stranded DNA using NAD as a coenzyme and as the energy source for the reaction. This Salmonella choleraesuis (strain SC-B67) protein is DNA ligase B.